Here is a 396-residue protein sequence, read N- to C-terminus: Elongation factor Tu (396 aa).

The tr-type G domain occupies 10-206 (KPHVNVGTIG…ALDTYIPTPE (197 aa)). The interval 19 to 26 (GHVDHGKT) is G1. 19–26 (GHVDHGKT) is a binding site for GTP. Mg(2+) is bound at residue T26. The tract at residues 60–64 (GITIN) is G2. The G3 stretch occupies residues 81–84 (DCPG). Residues 81–85 (DCPGH) and 136–139 (NKCD) contribute to the GTP site. The G4 stretch occupies residues 136-139 (NKCD). A G5 region spans residues 174-176 (SAK).

It belongs to the TRAFAC class translation factor GTPase superfamily. Classic translation factor GTPase family. EF-Tu/EF-1A subfamily. As to quaternary structure, monomer.

It is found in the cytoplasm. The enzyme catalyses GTP + H2O = GDP + phosphate + H(+). GTP hydrolase that promotes the GTP-dependent binding of aminoacyl-tRNA to the A-site of ribosomes during protein biosynthesis. The chain is Elongation factor Tu from Burkholderia vietnamiensis (strain G4 / LMG 22486) (Burkholderia cepacia (strain R1808)).